The chain runs to 265 residues: Homeobox protein Nkx-6.3 (265 aa).

A DNA-binding region (homeobox) is located at residues lysine 139–serine 198. Residues lysine 196–aspartate 240 form a disordered region.

It localises to the nucleus. Its function is as follows. Putative transcription factor, which may be involved in patterning of central nervous system and pancreas. This is Homeobox protein Nkx-6.3 (NKX6-3) from Homo sapiens (Human).